We begin with the raw amino-acid sequence, 190 residues long: Dynein axonemal light chain 1 (190 aa).

N-acetylalanine is present on Ala-2. LRR repeat units lie at residues 49-70 (NCEKLSLSTNCIEKIANLNGLK), 71-92 (NLRILSLGRNNIKNLNGLEAVG), 94-115 (TLEELWISYNFIEKLKGIHVMK), and 116-137 (KLKILYMSNNLVKDWAEFLKLA). Ser-56 is subject to Phosphoserine. Residues 150–190 (NPLEEKHSAEGNWIDEATKRVPKLKKLDGTPVIKEDEEEES) form the LRRCT domain.

It belongs to the dynein light chain LC1-type family. As to quaternary structure, interacts with ZMYND10 (via C-terminus). Interacts with DNAH5, a outer arm dynein heavy chain. Interacts with tubulin located within the A-tubule of the outer doublets in a ATP-independent manner. Expressed in the respiratory epithelium of the upper airways and the ependymal cells lining the brain ventricles.

It localises to the cytoplasm. The protein localises to the cytoskeleton. The protein resides in the cilium axoneme. Its function is as follows. Part of the multisubunit axonemal ATPase complexes that generate the force for cilia motility and govern beat frequency. Component of the outer arm dynein (ODA). May be involved in a mechanosensory feedback mechanism controlling ODA activity based on external conformational cues by tethering the outer arm dynein heavy chain (DNAH5) to the microtubule within the axoneme. Important for ciliary function in the airways and for the function of the cilia that produce the nodal flow essential for the determination of the left-right asymmetry. This chain is Dynein axonemal light chain 1 (Dnal1), found in Mus musculus (Mouse).